The following is a 151-amino-acid chain: Large ribosomal subunit protein uL13 (151 aa).

This sequence belongs to the universal ribosomal protein uL13 family. In terms of assembly, part of the 50S ribosomal subunit.

Its function is as follows. This protein is one of the early assembly proteins of the 50S ribosomal subunit, although it is not seen to bind rRNA by itself. It is important during the early stages of 50S assembly. This chain is Large ribosomal subunit protein uL13, found in Mycoplasma mycoides subsp. mycoides SC (strain CCUG 32753 / NCTC 10114 / PG1).